The primary structure comprises 328 residues: GMP reductase (328 aa).

Residue Cys174 is the Thioimidate intermediate of the active site. 203 to 226 (IIADGGIRTHGDIAKSIRFGASMV) lines the NADP(+) pocket.

It belongs to the IMPDH/GMPR family. GuaC type 2 subfamily.

It catalyses the reaction IMP + NH4(+) + NADP(+) = GMP + NADPH + 2 H(+). Catalyzes the irreversible NADPH-dependent deamination of GMP to IMP. It functions in the conversion of nucleobase, nucleoside and nucleotide derivatives of G to A nucleotides, and in maintaining the intracellular balance of A and G nucleotides. The protein is GMP reductase of Staphylococcus saprophyticus subsp. saprophyticus (strain ATCC 15305 / DSM 20229 / NCIMB 8711 / NCTC 7292 / S-41).